A 120-amino-acid polypeptide reads, in one-letter code: LOB domain-containing protein 8 (120 aa).

Residues 8-109 (RPCCVCITKN…AYLHELEEKI (102 aa)) form the LOB domain.

Belongs to the LOB domain-containing protein family.

This is LOB domain-containing protein 8 (LBD8) from Arabidopsis thaliana (Mouse-ear cress).